The sequence spans 74 residues: uncharacterized protein (74 aa).

Basic and acidic residues-rich tracts occupy residues 1–13 (MKKQKSIDKHQLK) and 20–60 (IKAK…KSFE). The tract at residues 1–74 (MKKQKSIDKH…ESQMDWHQYK (74 aa)) is disordered. Polar residues predominate over residues 64-74 (NESQMDWHQYK).

This is an uncharacterized protein from Bacillus subtilis (strain 168).